Consider the following 448-residue polypeptide: Glutamate--tRNA ligase 1 (448 aa).

The 'HIGH' region signature appears at 9 to 19 (PSPTGKLHIGN). The short motif at 240–244 (KISKR) is the 'KMSKS' region element. ATP is bound at residue K243.

This sequence belongs to the class-I aminoacyl-tRNA synthetase family. Glutamate--tRNA ligase type 1 subfamily. Monomer.

The protein localises to the cytoplasm. The enzyme catalyses tRNA(Glu) + L-glutamate + ATP = L-glutamyl-tRNA(Glu) + AMP + diphosphate. Functionally, catalyzes the attachment of glutamate to tRNA(Glu) in a two-step reaction: glutamate is first activated by ATP to form Glu-AMP and then transferred to the acceptor end of tRNA(Glu). The protein is Glutamate--tRNA ligase 1 of Orientia tsutsugamushi (strain Ikeda) (Rickettsia tsutsugamushi).